Reading from the N-terminus, the 313-residue chain is tRNA dimethylallyltransferase (313 aa).

10–17 contacts ATP; sequence GPTASGKT. 12–17 provides a ligand contact to substrate; it reads TASGKT. 3 interaction with substrate tRNA regions span residues 35–38, 159–163, and 240–245; these read DSAM, QRIQR, and RCVGYR.

The protein belongs to the IPP transferase family. Monomer. The cofactor is Mg(2+).

It carries out the reaction adenosine(37) in tRNA + dimethylallyl diphosphate = N(6)-dimethylallyladenosine(37) in tRNA + diphosphate. Functionally, catalyzes the transfer of a dimethylallyl group onto the adenine at position 37 in tRNAs that read codons beginning with uridine, leading to the formation of N6-(dimethylallyl)adenosine (i(6)A). The protein is tRNA dimethylallyltransferase of Legionella pneumophila (strain Paris).